The following is a 215-amino-acid chain: Small ribosomal subunit protein uS7 (215 aa).

It belongs to the universal ribosomal protein uS7 family. In terms of assembly, part of the 30S ribosomal subunit.

In terms of biological role, one of the primary rRNA binding proteins, it binds directly to 16S rRNA where it nucleates assembly of the head domain of the 30S subunit. Is located at the subunit interface close to the decoding center. The protein is Small ribosomal subunit protein uS7 of Thermococcus onnurineus (strain NA1).